Consider the following 151-residue polypeptide: uncharacterized protein (151 aa).

Residues 1-24 (MHAKTKKLGTDTSYKRPQVTAQEQ) form a disordered region.

This is an uncharacterized protein from Acanthamoeba polyphaga mimivirus (APMV).